A 147-amino-acid chain; its full sequence is UPF0306 protein YhbP (147 aa).

This sequence belongs to the UPF0306 family.

This chain is UPF0306 protein YhbP, found in Escherichia coli O1:K1 / APEC.